Here is a 248-residue protein sequence, read N- to C-terminus: Phosphatidylserine decarboxylase proenzyme (248 aa).

Serine 206 serves as the catalytic Schiff-base intermediate with substrate; via pyruvic acid. Pyruvic acid (Ser); by autocatalysis is present on serine 206.

Belongs to the phosphatidylserine decarboxylase family. PSD-A subfamily. Heterodimer of a large membrane-associated beta subunit and a small pyruvoyl-containing alpha subunit. Pyruvate is required as a cofactor. Post-translationally, is synthesized initially as an inactive proenzyme. Formation of the active enzyme involves a self-maturation process in which the active site pyruvoyl group is generated from an internal serine residue via an autocatalytic post-translational modification. Two non-identical subunits are generated from the proenzyme in this reaction, and the pyruvate is formed at the N-terminus of the alpha chain, which is derived from the carboxyl end of the proenzyme. The post-translation cleavage follows an unusual pathway, termed non-hydrolytic serinolysis, in which the side chain hydroxyl group of the serine supplies its oxygen atom to form the C-terminus of the beta chain, while the remainder of the serine residue undergoes an oxidative deamination to produce ammonia and the pyruvoyl prosthetic group on the alpha chain.

Its subcellular location is the cell membrane. It catalyses the reaction a 1,2-diacyl-sn-glycero-3-phospho-L-serine + H(+) = a 1,2-diacyl-sn-glycero-3-phosphoethanolamine + CO2. It participates in phospholipid metabolism; phosphatidylethanolamine biosynthesis; phosphatidylethanolamine from CDP-diacylglycerol: step 2/2. Functionally, catalyzes the formation of phosphatidylethanolamine (PtdEtn) from phosphatidylserine (PtdSer). The sequence is that of Phosphatidylserine decarboxylase proenzyme from Nitrobacter hamburgensis (strain DSM 10229 / NCIMB 13809 / X14).